A 711-amino-acid chain; its full sequence is Ribosomal RNA large subunit methyltransferase K/L (711 aa).

The THUMP domain occupies 43 to 154 (LGYRITLWSR…RGEITIGINF (112 aa)).

The protein belongs to the methyltransferase superfamily. RlmKL family.

The protein resides in the cytoplasm. It catalyses the reaction guanosine(2445) in 23S rRNA + S-adenosyl-L-methionine = N(2)-methylguanosine(2445) in 23S rRNA + S-adenosyl-L-homocysteine + H(+). It carries out the reaction guanosine(2069) in 23S rRNA + S-adenosyl-L-methionine = N(2)-methylguanosine(2069) in 23S rRNA + S-adenosyl-L-homocysteine + H(+). Specifically methylates the guanine in position 2445 (m2G2445) and the guanine in position 2069 (m7G2069) of 23S rRNA. This chain is Ribosomal RNA large subunit methyltransferase K/L, found in Shewanella pealeana (strain ATCC 700345 / ANG-SQ1).